A 664-amino-acid polypeptide reads, in one-letter code: MVQPELTQSVGYGIVVGLGLGFAALMIFVSWSLKKFNNENQTSEHFNTASHSVRTGLVASAVVSSWTWASTLLTSAQKTYQYGVSGAFWYASGACVQILLFTVLAIELKRKAPNAHTFLEVVRARCGPIAHGVFLVFAYITNILVMAMLLCGGSATISSVTGMNTVAVCFLLPVGVIIYTMFGGIKATFLTDYIHTVIILVILIMFSLATYSADKKIGSPGKLYDMLKEAGDAHPVAGNAQGSYLTMRSQEGAIFFIINLAGNFGTVFVDNGYWQKAIAANPASALPGYILGGLAWFAIPWLAATTMGLVALGLENKPYFPTYPNRMSDLEVSEGLVLPYAAIALMGRAGANATLLLVFMAVTSAASAELIAVSSIFTYDIYKQYVRPRATGKELLYTGHASLIVFGFAMSGFATGLYYGQVSMGYLYLLMGVLVCPAVVPATCVMLFSRVSTIAVTVSPVLGIISSIITWLVVARAEGGKTLTIETTGANNPMLAGNVVGLLSPALYILILSIIFPEKYDFNRLLATFAMHFSSEEDEIQQTKKLNRASVISKVAALIITAAFIILWPWPMYGTGYIFSKRFFTGWVVVGLIWIFFTVFAVGIFPLWEGRNDIYQVVSNMAASIFGRKVNDIVEDEGVVVETISIGSGSKEKVNFEKKDIESV.

Transmembrane regions (helical) follow at residues 9–29 (SVGYGIVVGLGLGFAALMIFV), 56–76 (GLVASAVVSSWTWASTLLTSA), 86–106 (GAFWYASGACVQILLFTVLAI), 132–152 (GVFLVFAYITNILVMAMLLCG), 165–185 (TVAVCFLLPVGVIIYTMFGGI), 189–209 (FLTDYIHTVIILVILIMFSLA), 252–272 (GAIFFIINLAGNFGTVFVDNG), 290–310 (ILGGLAWFAIPWLAATTMGLV), 327–347 (MSDLEVSEGLVLPYAAIALMG), 353–373 (ATLLLVFMAVTSAASAELIAV), 395–415 (LLYTGHASLIVFGFAMSGFAT), 428–448 (YLLMGVLVCPAVVPATCVMLF), 454–474 (IAVTVSPVLGIISSIITWLVV), 496–516 (AGNVVGLLSPALYILILSIIF), 555–575 (VAALIITAAFIILWPWPMYGT), and 587–607 (WVVVGLIWIFFTVFAVGIFPL).

Belongs to the sodium:solute symporter (SSF) (TC 2.A.21) family.

The protein resides in the membrane. In terms of biological role, involved in active transport of urea. The protein is Probable urea active transporter 1 (dur3-1) of Schizosaccharomyces pombe (strain 972 / ATCC 24843) (Fission yeast).